A 501-amino-acid chain; its full sequence is NAD(P)H-quinone oxidoreductase subunit 2, chloroplastic (501 aa).

Transmembrane regions (helical) follow at residues 15 to 35 (ILPE…DLIL), 42 to 62 (VFFF…IFQL), 82 to 102 (IFRI…IDFI), 107 to 127 (LAIT…MFLC), 132 to 152 (LITI…LSGY), 167 to 187 (LLIG…LYGL), 210 to 230 (FGSL…LSLV), 244 to 264 (PTPV…ALLV), 278 to 298 (WHSL…LVAI), 307 to 327 (LAYS…TGNF), 334 to 354 (IVYL…IILF), 378 to 398 (FSLA…GFFG), 410 to 430 (GLYF…YYYL), and 466 to 486 (VSII…NPII).

Belongs to the complex I subunit 2 family. As to quaternary structure, NDH is composed of at least 16 different subunits, 5 of which are encoded in the nucleus.

It is found in the plastid. It localises to the chloroplast thylakoid membrane. The catalysed reaction is a plastoquinone + NADH + (n+1) H(+)(in) = a plastoquinol + NAD(+) + n H(+)(out). The enzyme catalyses a plastoquinone + NADPH + (n+1) H(+)(in) = a plastoquinol + NADP(+) + n H(+)(out). In terms of biological role, NDH shuttles electrons from NAD(P)H:plastoquinone, via FMN and iron-sulfur (Fe-S) centers, to quinones in the photosynthetic chain and possibly in a chloroplast respiratory chain. The immediate electron acceptor for the enzyme in this species is believed to be plastoquinone. Couples the redox reaction to proton translocation, and thus conserves the redox energy in a proton gradient. The sequence is that of NAD(P)H-quinone oxidoreductase subunit 2, chloroplastic from Physcomitrium patens (Spreading-leaved earth moss).